The following is a 703-amino-acid chain: Lethal(3)malignant brain tumor-like protein 2 (703 aa).

The segment at 1–70 (MEKPRGTEET…AGELPTSPLH (70 aa)) is disordered. Residue serine 13 is modified to Phosphoserine. Acidic residues predominate over residues 15 to 25 (PMEEEEDDDLE). Residues 35 to 49 (SYNSSAGSESSSYLE) show a composition bias toward low complexity. Residues 50–60 (ESSEAENEDRE) show a composition bias toward acidic residues. Serine 67 carries the phosphoserine modification. The segment at 81 to 116 (DGSGSEPAVCEMCGIVGTREAFFSKTKRFCSVSCSR) adopts an FCS-type zinc-finger fold. 4 residues coordinate Zn(2+): cysteine 90, cysteine 93, cysteine 110, and cysteine 114. MBT repeat units follow at residues 179-283 (FDWG…LVPP), 291-391 (TDWK…IKMS), 397-500 (MSHH…LTPP), and 508-604 (FDWE…LQPP). At serine 338 the chain carries Phosphoserine. Lysine 405 participates in a covalent cross-link: Glycyl lysine isopeptide (Lys-Gly) (interchain with G-Cter in SUMO2). Disordered regions lie at residues 604 to 649 (PVSA…KKPL) and 672 to 703 (VKEE…ERDS). Positions 619–634 (TKKKKKQFGKKRKRIP) are enriched in basic residues. Residues lysine 647 and lysine 673 each participate in a glycyl lysine isopeptide (Lys-Gly) (interchain with G-Cter in SUMO2) cross-link. Serine 681, serine 685, and serine 687 each carry phosphoserine. Lysine 698 participates in a covalent cross-link: Glycyl lysine isopeptide (Lys-Gly) (interchain with G-Cter in SUMO1); alternate. Residue lysine 698 forms a Glycyl lysine isopeptide (Lys-Gly) (interchain with G-Cter in SUMO2); alternate linkage.

Part of the E2F6.com-1 complex in G0 phase composed of E2F6, MGA, MAX, TFDP1, CBX3, BAT8, EUHMTASE1, RING1, RNF2, MBLR, BAT8 and YAF2.

Its subcellular location is the nucleus. Functionally, putative Polycomb group (PcG) protein. PcG proteins maintain the transcriptionally repressive state of genes, probably via a modification of chromatin, rendering it heritably changed in its expressibility. Its association with a chromatin-remodeling complex suggests that it may contribute to prevent expression of genes that trigger the cell into mitosis. Binds to monomethylated and dimethylated 'Lys-20' on histone H4. Binds histone H3 peptides that are monomethylated or dimethylated on 'Lys-4', 'Lys-9' or 'Lys-27'. This is Lethal(3)malignant brain tumor-like protein 2 (L3mbtl2) from Rattus norvegicus (Rat).